The chain runs to 871 residues: Dual O-methyltransferase/FAD-dependent monooxygenase CTB3 (871 aa).

The O-methyltransferase stretch occupies residues 1–429 (MMQFQRDLEA…GLLTVRSAGQ (429 aa)). Position 279 (Asp-279) interacts with S-adenosyl-L-methionine. The active-site Proton acceptor is the His-331. Residues 430–871 (TALSGTNTLT…NLVDCSEFVF (442 aa)) are FAD-dependent monooxygenase. The FAD site is built by Glu-485, Arg-569, and Ala-806.

The protein in the C-terminal section; belongs to the paxM FAD-dependent monooxygenase family. It in the N-terminal section; belongs to the class I-like SAM-binding methyltransferase superfamily. Cation-independent O-methyltransferase family. COMT subfamily.

The enzyme catalyses nor-toralactone + S-adenosyl-L-methionine = toralactone + S-adenosyl-L-homocysteine + H(+). It catalyses the reaction toralactone + NADH + O2 + H(+) = 1-(3,4,5-trihydroxy-7-methoxynaphthalen-2-yl)propan-2-one + CO2 + NAD(+). It functions in the pathway mycotoxin biosynthesis. Functionally, dual O-methyltransferase/FAD-dependent monooxygenase; part of the gene cluster that mediates the biosynthesis of cercosporin, a light-activated, non-host-selective toxin. The perylenequinone chromophore of cercosporin absorbs light energy to attain an electronically-activated triplet state and produces active oxygen species such as the hydroxyl radical, superoxide, hydrogen peroxide or singlet oxygen upon reaction with oxygen molecules. These reactive oxygen species cause damage to various cellular components including lipids, proteins and nucleic acids. The first step of cercosporin biosynthesis is performed by the polyketide synthase CTB1 which catalyzes the formation of nor-toralactone. The starter unit acyltransferase (SAT) domain of CTB1 initiates polyketide extension by the selective utilization of acetyl-CoA, which is elongated to the heptaketide in the beta-ketoacyl synthase (KS) domain by successive condensations with six malonyl units introduced by the malonyl acyltransferase (MAT) domain. The product template (PT) domain catalyzes C4-C9 and C2-C11 aldol cyclizations and dehydrations to a trihydroxynaphthalene, which is thought to be delivered to the thioesterase (TE) domain for product release. The bifunctional enzyme CTB3 then methylates nor-toralactone to toralactone before conducting an unusual oxidative aromatic ring opening. The O-methyltransferase CTB2 further methylates the nascent OH-6 of the CBT3 product, blocking further oxidation at this site before the reductase CTB6 reduces the 2-oxopropyl ketone at position C7, giving naphthalene. The FAD-dependent monooxygenase CTB5 in concert with the multicopper oxidase CTB12 are responsible for homodimerization of naphthalene with CTB7 installing the dioxepine moiety, finally producing cercosporin. The fasciclin domain-containing protein CTB11 might act with CTB5 and CTB12 whereas the roles of CTB9 and CTB10 have still to be elucidated. This Cercospora nicotianae (Barn spot disease fungus) protein is Dual O-methyltransferase/FAD-dependent monooxygenase CTB3.